The primary structure comprises 261 residues: Imidazole glycerol phosphate synthase subunit HisF (261 aa).

Catalysis depends on residues Asp-12 and Asp-131.

The protein belongs to the HisA/HisF family. Heterodimer of HisH and HisF.

It is found in the cytoplasm. The enzyme catalyses 5-[(5-phospho-1-deoxy-D-ribulos-1-ylimino)methylamino]-1-(5-phospho-beta-D-ribosyl)imidazole-4-carboxamide + L-glutamine = D-erythro-1-(imidazol-4-yl)glycerol 3-phosphate + 5-amino-1-(5-phospho-beta-D-ribosyl)imidazole-4-carboxamide + L-glutamate + H(+). It functions in the pathway amino-acid biosynthesis; L-histidine biosynthesis; L-histidine from 5-phospho-alpha-D-ribose 1-diphosphate: step 5/9. Its function is as follows. IGPS catalyzes the conversion of PRFAR and glutamine to IGP, AICAR and glutamate. The HisF subunit catalyzes the cyclization activity that produces IGP and AICAR from PRFAR using the ammonia provided by the HisH subunit. This chain is Imidazole glycerol phosphate synthase subunit HisF, found in Brucella anthropi (strain ATCC 49188 / DSM 6882 / CCUG 24695 / JCM 21032 / LMG 3331 / NBRC 15819 / NCTC 12168 / Alc 37) (Ochrobactrum anthropi).